The primary structure comprises 390 residues: Alcohol dehydrogenase-like 7 (390 aa).

Positions 56, 58, 78, 108, 111, 114, 122, and 187 each coordinate Zn(2+). Residues Ser-58 and His-78 each contribute to the an alcohol site. An NAD(+)-binding site is contributed by Ser-58. NAD(+) is bound by residues 212–217 (GLGSIG), Asp-236, Lys-241, 306–308 (LGV), Phe-334, and Arg-384.

The protein belongs to the zinc-containing alcohol dehydrogenase family. Class-III subfamily. In terms of assembly, homodimer. Zn(2+) is required as a cofactor.

It localises to the cytoplasm. The catalysed reaction is a primary alcohol + NAD(+) = an aldehyde + NADH + H(+). It carries out the reaction a secondary alcohol + NAD(+) = a ketone + NADH + H(+). The sequence is that of Alcohol dehydrogenase-like 7 from Arabidopsis thaliana (Mouse-ear cress).